A 355-amino-acid polypeptide reads, in one-letter code: Elongation factor Ts, mitochondrial (355 aa).

Residues 1–46 (MIRSLNFALRNCNKNILINSNKITINNGLLLKKNNFCTQSTSEVKV) constitute a mitochondrion transit peptide.

It belongs to the EF-Ts family.

It localises to the mitochondrion. Functionally, associates with the EF-Tu.GDP complex and induces the exchange of GDP to GTP. It remains bound to the aminoacyl-tRNA.EF-Tu.GTP complex up to the GTP hydrolysis stage on the ribosome. The polypeptide is Elongation factor Ts, mitochondrial (tsfm) (Dictyostelium discoideum (Social amoeba)).